The following is a 307-amino-acid chain: MNTQLLVTLLAMSIGGVALAAEIKMDDQSQLTQKAGKGAGESYFQPPQEKDLPANAYGELVQQGRAIFVDTQKYAAEYVGNGMNCTNCHLEQGRKANSAPLWGAYPMYPAYRKKNDKVNSYAERVQGCFQFSMNGTPPAADSHVINALTAYSYWLSTGAPTGQELPGRAYPEVPQPQGGFDIAKGKQIYAEQCAVCHGDDGQGQKAGGGYVFPPLWGKDSFNWGAGMHRINTAAAFIKESMPLGKGGSLSDADAWHVAAYMNSHERPQDPRLIEGSVEKTRLKYHANDGVNLYGQQVDGALLGQGVK.

The signal sequence occupies residues 1-20 (MNTQLLVTLLAMSIGGVALA). Cytochrome c domains are found at residues 59 to 156 (ELVQ…YWLS) and 180 to 265 (FDIA…NSHE). Residues Cys-85, Cys-88, His-89, Cys-193, Cys-196, and His-197 each contribute to the heme c site.

In terms of assembly, monomer. In terms of processing, binds 2 heme c groups covalently per subunit.

It is found in the periplasm. It catalyses the reaction 2 thiosulfate + 2 Fe(III)-[cytochrome c] = tetrathionate + 2 Fe(II)-[cytochrome c] + 2 H(+). Its function is as follows. Catalyzes the oxidation of 2 molecules of thiosulfate to tetrathionate, using TsdB as an electron acceptor. In Stutzerimonas stutzeri (strain A1501) (Pseudomonas stutzeri), this protein is Thiosulfate dehydrogenase (tsdA).